The sequence spans 326 residues: AA9 family lytic polysaccharide monooxygenase B (326 aa).

A signal peptide spans 1 to 19 (MKSFTIAALAALWAQEAAA). Residues H20 and H98 each contribute to the Cu(2+) site. C57 and C192 are disulfide-bonded. The O2 site is built by H178 and Q187. Y189 lines the Cu(2+) pocket. Residues 265–281 (PSATLTQPTSTATATSA) show a composition bias toward low complexity. The tract at residues 265 to 286 (PSATLTQPTSTATATSAPGGGG) is disordered. The 38-residue stretch at 289 to 326 (CTAAKYQQCGGTGYTGCTTCASGSTCSAVSPPYYSQCL) folds into the CBM1 domain.

It belongs to the polysaccharide monooxygenase AA9 family. Cu(2+) is required as a cofactor.

Its subcellular location is the secreted. It catalyses the reaction [(1-&gt;4)-beta-D-glucosyl]n+m + reduced acceptor + O2 = 4-dehydro-beta-D-glucosyl-[(1-&gt;4)-beta-D-glucosyl]n-1 + [(1-&gt;4)-beta-D-glucosyl]m + acceptor + H2O.. Functionally, lytic polysaccharide monooxygenase (LPMO) that depolymerizes crystalline and amorphous polysaccharides via the oxidation of scissile alpha- or beta-(1-4)-glycosidic bonds, yielding C1 and C4 oxidation products. Catalysis by LPMOs requires the reduction of the active-site copper from Cu(II) to Cu(I) by a reducing agent and H(2)O(2) or O(2) as a cosubstrate. Shows no activity on wheat arabinoxylan, konjac glucomannan, acetylated spruce galactoglucomannan, or cellopentaose. This chain is AA9 family lytic polysaccharide monooxygenase B, found in Thermothielavioides terrestris (strain ATCC 38088 / NRRL 8126) (Thielavia terrestris).